Here is a 412-residue protein sequence, read N- to C-terminus: Imidazolonepropionase (412 aa).

Residues H73 and H75 each contribute to the Fe(3+) site. The Zn(2+) site is built by H73 and H75. Positions 82, 145, and 178 each coordinate 4-imidazolone-5-propanoate. Y145 lines the N-formimidoyl-L-glutamate pocket. H247 contributes to the Fe(3+) binding site. Residue H247 coordinates Zn(2+). Q250 contributes to the 4-imidazolone-5-propanoate binding site. D322 contacts Fe(3+). Residue D322 participates in Zn(2+) binding. N-formimidoyl-L-glutamate is bound by residues N324 and G326. S327 provides a ligand contact to 4-imidazolone-5-propanoate.

Belongs to the metallo-dependent hydrolases superfamily. HutI family. The cofactor is Zn(2+). Requires Fe(3+) as cofactor.

It is found in the cytoplasm. The catalysed reaction is 4-imidazolone-5-propanoate + H2O = N-formimidoyl-L-glutamate. The protein operates within amino-acid degradation; L-histidine degradation into L-glutamate; N-formimidoyl-L-glutamate from L-histidine: step 3/3. Catalyzes the hydrolytic cleavage of the carbon-nitrogen bond in imidazolone-5-propanoate to yield N-formimidoyl-L-glutamate. It is the third step in the universal histidine degradation pathway. The polypeptide is Imidazolonepropionase (Shewanella amazonensis (strain ATCC BAA-1098 / SB2B)).